A 270-amino-acid polypeptide reads, in one-letter code: Phospholysine phosphohistidine inorganic pyrophosphate phosphatase (270 aa).

The Mg(2+) site is built by aspartate 19 and cysteine 21. Residues 19–21, 56–57, and lysine 191 contribute to the substrate site; these read DMC and TN. Aspartate 216 provides a ligand contact to Mg(2+).

The protein belongs to the HAD-like hydrolase superfamily. The cofactor is Mg(2+).

The protein resides in the cytoplasm. Its subcellular location is the nucleus. It catalyses the reaction diphosphate + H2O = 2 phosphate + H(+). In terms of biological role, phosphatase that hydrolyzes imidodiphosphate, 3-phosphohistidine and 6-phospholysine. Has broad substrate specificity and can also hydrolyze inorganic diphosphate, but with lower efficiency. This chain is Phospholysine phosphohistidine inorganic pyrophosphate phosphatase (lhpp), found in Danio rerio (Zebrafish).